Here is a 207-residue protein sequence, read N- to C-terminus: Small ribosomal subunit protein uS4c (207 aa).

One can recognise an S4 RNA-binding domain in the interval 92–156; that stretch reads MRLDNILFRL…YQSIITKRIE (65 aa).

This sequence belongs to the universal ribosomal protein uS4 family. In terms of assembly, part of the 30S ribosomal subunit. Contacts protein S5. The interaction surface between S4 and S5 is involved in control of translational fidelity.

It localises to the plastid. The protein resides in the chloroplast. Functionally, one of the primary rRNA binding proteins, it binds directly to 16S rRNA where it nucleates assembly of the body of the 30S subunit. With S5 and S12 plays an important role in translational accuracy. The chain is Small ribosomal subunit protein uS4c (rps4) from Equisetum sylvaticum (Wood horsetail).